The primary structure comprises 352 residues: Mitochondrial ubiquitin ligase activator of NFKB 1 (352 aa).

Over 1 to 8 (MESGGRPS) the chain is Cytoplasmic. A helical membrane pass occupies residues 9-29 (LCQFILLGTTSVVTAALYSVY). Topologically, residues 30–238 (RQKARVSQEL…LLQRQESSVR (209 aa)) are mitochondrial intermembrane. Lys52 participates in a covalent cross-link: Glycyl lysine isopeptide (Lys-Gly) (interchain with G-Cter in ubiquitin). A helical membrane pass occupies residues 239 to 259 (LWKVLALVFGFATCATLFFIL). Over 260–352 (RKQYLQRQER…ITRVIPLYNS (93 aa)) the chain is Cytoplasmic. Residues Lys273 and Lys299 each participate in a glycyl lysine isopeptide (Lys-Gly) (interchain with G-Cter in ubiquitin) cross-link. Residues 302 to 340 (CVVCLSSFKSCVFLECGHVCSCTECYRALPEPKKCPICR) form an RING-type zinc finger.

In terms of assembly, homooligomer. Interacts with MAP3K7/TAK1. Interacts with UBC9. Interacts with and sumoylates DNM1L. Interacts with MAVS. Interacts with TP53 (via N-terminus); the interaction leads to ubiquitination and proteasomal degradation of TP53. Ubiquitinated by PRKN during mitophagy, leading to its degradation and enhancement of mitophagy. Deubiquitinated by USP30. Widely expressed with highest levels in the heart, skeletal muscle, placenta, kidney and liver. Barely detectable in colon and thymus.

Its subcellular location is the mitochondrion outer membrane. It is found in the peroxisome. It catalyses the reaction S-ubiquitinyl-[E2 ubiquitin-conjugating enzyme]-L-cysteine + [acceptor protein]-L-lysine = [E2 ubiquitin-conjugating enzyme]-L-cysteine + N(6)-ubiquitinyl-[acceptor protein]-L-lysine.. The protein operates within protein modification; protein ubiquitination. It functions in the pathway protein modification; protein sumoylation. In terms of biological role, exhibits weak E3 ubiquitin-protein ligase activity. E3 ubiquitin ligases accept ubiquitin from an E2 ubiquitin-conjugating enzyme in the form of a thioester and then directly transfer the ubiquitin to targeted substrates. Can ubiquitinate AKT1 preferentially at 'Lys-284' involving 'Lys-48'-linked polyubiquitination and seems to be involved in regulation of Akt signaling by targeting phosphorylated Akt to proteasomal degradation. Mediates polyubiquitination of cytoplasmic TP53 at 'Lys-24' which targets TP53 for proteasomal degradation, thus reducing TP53 levels in the cytoplasm and mitochondrion. Proposed to preferentially act as a SUMO E3 ligase at physiological concentrations. Plays a role in the control of mitochondrial morphology by promoting mitochondrial fragmentation, and influences mitochondrial localization. Likely to promote mitochondrial fission through negatively regulating the mitochondrial fusion proteins MFN1 and MFN2, acting in a pathway that is parallel to the PRKN/PINK1 regulatory pathway. May also be involved in the sumoylation of the membrane fission protein DNM1L. Inhibits cell growth. When overexpressed, activates JNK through MAP3K7/TAK1 and induces caspase-dependent apoptosis. Involved in the modulation of innate immune defense against viruses by inhibiting RIGI-dependent antiviral response. Can mediate RIGI sumoylation and disrupt its polyubiquitination. The chain is Mitochondrial ubiquitin ligase activator of NFKB 1 (MUL1) from Homo sapiens (Human).